The chain runs to 247 residues: MNVLLCSINTLKRLYDISAVEVGQHFYWQIGSFQVHAQVLITSWVVIALLLVSAILIIRNLQTIPAFGQNFFEYVLEFIRDVSKTQIGEEYGPWVPFIGTLFLFIFVSNWSGALLPWKIIQLPHGELAAPTNDINTTVALALLTSIAYFYAGLSKKGLAYFNKYIQPTPILLPINILEDFTKPLSLSFRLFGNILADELVVVVLVSLVPLVVPIPVMFLGLFTSGIQALIFATLAAAYIGESMEGHH.

5 helical membrane passes run 38 to 58 (QVLI…ILII), 95 to 115 (VPFI…GALL), 134 to 154 (INTT…AGLS), 199 to 219 (LVVV…VMFL), and 220 to 240 (GLFT…AYIG).

The protein belongs to the ATPase A chain family. In terms of assembly, F-type ATPases have 2 components, CF(1) - the catalytic core - and CF(0) - the membrane proton channel. CF(1) has five subunits: alpha(3), beta(3), gamma(1), delta(1), epsilon(1). CF(0) has four main subunits: a, b, b' and c.

Its subcellular location is the plastid. The protein resides in the chloroplast thylakoid membrane. Functionally, key component of the proton channel; it plays a direct role in the translocation of protons across the membrane. The protein is ATP synthase subunit a, chloroplastic of Glycine max (Soybean).